We begin with the raw amino-acid sequence, 282 residues long: MALEAAGGPPEETLSLWKREQARLKAHVVDRDTEAWQRDPAFSGLQRVGGVDVSFVKGDSVRACASLVVLSFPELEVVYEESRMVSLTAPYVSGFLAFREVPFLLELVQQLREKEPGLMPQVLLVDGNGVLHHRGFGVACHLGVLTDLPCVGVAKKLLQVDGLENNALHKEKIRLLQTRGDSFPLLGDSGTVLGMALRSHDRSTRPLYISVGHRMSLEAAVRLTCCCCRFRIPEPVRQADICSREHIRKSLGLPGPPTPRSPKAQRPVACPKGDSGESSALC.

Mg(2+) is bound by residues D52 and D126. The interval 250–282 (SLGLPGPPTPRSPKAQRPVACPKGDSGESSALC) is disordered.

This sequence belongs to the endonuclease V family. As to quaternary structure, monomer. Interacts with PABPC1; the interaction is RNA-dependent and stimulates ENDOV activity. Requires Mg(2+) as cofactor.

The protein localises to the cytoplasm. The protein resides in the nucleus. It is found in the nucleolus. It localises to the stress granule. Its activity is regulated as follows. Inhibited by normal intracellular concentrations of ATP. Endoribonuclease that specifically cleaves inosine-containing RNAs: cleaves RNA at the second phosphodiester bond 3' to inosine. Active against both single-stranded and double-stranded RNAs. Has strong preference for single-stranded RNAs (ssRNAs) toward double-stranded RNAs (dsRNAs). Cleaves mRNAs and tRNAs containing inosine. Also able to cleave structure-specific dsRNA substrates containing the specific sites 5'-IIUI-3' and 5'-UIUU-3'. Inosine is present in a number of RNAs following editing; the function of inosine-specific endoribonuclease is still unclear: it could either play a regulatory role in edited RNAs, or be involved in antiviral response by removing the hyperedited long viral dsRNA genome that has undergone A-to-I editing. Binds branched DNA structures. Functionally, endoribonuclease that specifically cleaves inosine-containing RNAs: cleaves RNA at the second phosphodiester bond 3' to inosine. Active against both single-stranded and double-stranded RNAs. Cleaves tRNAs containing inosine. This Homo sapiens (Human) protein is Endonuclease V (ENDOV).